Consider the following 247-residue polypeptide: MPKLVLVRHGQSEWNEKNLFTGWVDVKLSAKGQQEAARAGELLKEKKVYPDVLYTSKLSRAIQTANIALEKADRLWIPVNRSWRLNERHYGDLQGKDKAETLKKFGEEKFNTYRRSFDVPPPPIDASSPFSQKGDERYKYVDPNVLPETESLALVIDRLLPYWQDVIAKDLLSGKTVMIAAHGNSLRGLVKHLEGISDADIAKLNIPTGIPLVFELDENLKPSKPSYYLDPEAAAAGAAAVANQGKK.

Substrate contacts are provided by residues 8 to 15 and 21 to 22; these read RHGQSEWN and TG. Catalysis depends on His-9, which acts as the Tele-phosphohistidine intermediate. Residue Ser-12 is modified to Phosphoserine. Lys-31 is covalently cross-linked (Glycyl lysine isopeptide (Lys-Gly) (interchain with G-Cter in ubiquitin)). Position 49 is a phosphotyrosine (Tyr-49). Lys-57 is covalently cross-linked (Glycyl lysine isopeptide (Lys-Gly) (interchain with G-Cter in ubiquitin)). Arg-60 lines the substrate pocket. Lys-71 participates in a covalent cross-link: Glycyl lysine isopeptide (Lys-Gly) (interchain with G-Cter in ubiquitin). Residue Glu-87 is the Proton donor/acceptor of the active site. Substrate contacts are provided by residues 87-90, Lys-98, and 114-115; these read ERHY and RR. A phosphoserine mark is found at Ser-116, Ser-127, and Ser-128. Residues Lys-139 and Lys-175 each participate in a glycyl lysine isopeptide (Lys-Gly) (interchain with G-Cter in ubiquitin) cross-link. Residue 183–184 participates in substrate binding; that stretch reads GN. Ser-185 carries the post-translational modification Phosphoserine. Residue Lys-191 forms a Glycyl lysine isopeptide (Lys-Gly) (interchain with G-Cter in ubiquitin) linkage. A Phosphoserine modification is found at Ser-197.

This sequence belongs to the phosphoglycerate mutase family. BPG-dependent PGAM subfamily. As to quaternary structure, homotetramer: dimer of dimers.

It localises to the cytoplasm. It is found in the mitochondrion outer membrane. Its subcellular location is the mitochondrion intermembrane space. The enzyme catalyses (2R)-2-phosphoglycerate = (2R)-3-phosphoglycerate. It functions in the pathway carbohydrate degradation; glycolysis; pyruvate from D-glyceraldehyde 3-phosphate: step 3/5. Its activity is regulated as follows. Inhibited by inositol hexakisphosphate and benzene tri-, tetra- and hexacarboxylates. Functionally, interconversion of 3- and 2-phosphoglycerate with 2,3-bisphosphoglycerate as the primer of the reaction. Can also catalyze the reaction of EC 5.4.2.4 (synthase), but with a reduced activity. The polypeptide is Phosphoglycerate mutase 1 (GPM1) (Saccharomyces cerevisiae (strain ATCC 204508 / S288c) (Baker's yeast)).